Reading from the N-terminus, the 138-residue chain is Vesicle transport protein GOT1B (138 aa).

M1 carries the post-translational modification N-acetylmethionine. Over 1–9 (MISLTDTQK) the chain is Cytoplasmic. The chain crosses the membrane as a helical span at residues 10-30 (IGMGLTGFGVFFLFFGMILFF). Over 31-32 (DK) the chain is Lumenal. Residues 33-53 (ALLAIGNVLFVAGLAFVIGLE) form a helical membrane-spanning segment. At 54–68 (RTFRFFFQKHKMKAT) the chain is on the cytoplasmic side. Residues 69 to 89 (GFFLGGVFVVLIGWPLIGMIF) form a helical membrane-spanning segment. E90 is a topological domain (lumenal). A helical membrane pass occupies residues 91 to 109 (IYGFFLLFRGFFPVVVGFI). The Cytoplasmic portion of the chain corresponds to 110–138 (RRVPVLGSLLNLPGIRSFVDKVGESNNMV).

The protein belongs to the GOT1 family.

It is found in the golgi apparatus membrane. In terms of biological role, may be involved in fusion of ER-derived transport vesicles with the Golgi complex. The protein is Vesicle transport protein GOT1B of Bos taurus (Bovine).